Here is a 116-residue protein sequence, read N- to C-terminus: Large ribosomal subunit protein bL17 (116 aa).

The protein belongs to the bacterial ribosomal protein bL17 family. Part of the 50S ribosomal subunit. Contacts protein L32.

This Helicobacter acinonychis (strain Sheeba) protein is Large ribosomal subunit protein bL17.